A 1339-amino-acid chain; its full sequence is Astrotactin-2 (1339 aa).

A signal peptide spans 1-49 (MAAAGARLSPGPGSGLRGRPRLCFHPGPPPLLPLLLLFLLLLPPPPLLA). The Lumenal portion of the chain corresponds to 50–206 (GATAAASREP…IVEEQMHILH (157 aa)). Asparagine 168 carries an N-linked (GlcNAc...) asparagine glycan. The helical transmembrane segment at 207–227 (ISVMGGLIALLLLLLVFTVAL) threads the bilayer. Topologically, residues 228-434 (YAQRRWQKRR…KGLLKSPVNK (207 aa)) are cytoplasmic. Disordered regions lie at residues 296–316 (EEDE…EFGS) and 363–408 (TPIE…ADDE). A helical transmembrane segment spans residues 435–455 (TALTLIAVSSCILAMVCGSQM). Topologically, residues 456-1339 (SCPLTVKVTL…RNTYGESKGR (884 aa)) are lumenal. EGF-like domains are found at residues 510-550 (VRDL…HLCV), 651-695 (PVRD…SGCY), and 699-751 (KGID…KSCL). 9 disulfide bridges follow: cysteine 514–cysteine 526, cysteine 522–cysteine 533, cysteine 535–cysteine 549, cysteine 655–cysteine 668, cysteine 662–cysteine 679, cysteine 681–cysteine 694, cysteine 703–cysteine 715, cysteine 711–cysteine 735, and cysteine 737–cysteine 750. 2 N-linked (GlcNAc...) asparagine glycosylation sites follow: asparagine 770 and asparagine 783. 3 cysteine pairs are disulfide-bonded: cysteine 825-cysteine 987, cysteine 916-cysteine 977, and cysteine 983-cysteine 990. Asparagine 1020 carries N-linked (GlcNAc...) asparagine glycosylation. 5 disulfides stabilise this stretch: cysteine 1036/cysteine 1047, cysteine 1049/cysteine 1062, cysteine 1136/cysteine 1158, cysteine 1190/cysteine 1277, and cysteine 1298/cysteine 1321. In terms of domain architecture, Fibronectin type-III spans 1065-1188 (LLQPVLRLSP…SELSTVTLRT (124 aa)).

It belongs to the astrotactin family. Interacts with ASTN1; the interaction is not calcium-dependent.

It is found in the membrane. The protein resides in the perikaryon. Its subcellular location is the cytoplasm. The protein localises to the cell cortex. It localises to the early endosome. It is found in the late endosome. The protein resides in the cytoplasmic vesicle. Its subcellular location is the clathrin-coated vesicle. Mediates recycling of the neuronal cell adhesion molecule ASTN1 to the anterior pole of the cell membrane in migrating neurons. Promotes ASTN1 internalization and intracellular transport of endocytosed ASTN1. Selectively binds inositol-4,5-bisphosphate, inositol-3,4,5-trisphosphate and inositol-1,3,4,5-tetrakisphosphate, suggesting it is recruited to membranes that contain lipids with a phosphoinositide headgroup. This chain is Astrotactin-2 (ASTN2), found in Homo sapiens (Human).